The primary structure comprises 432 residues: Ciliated left-right organizer protein containing ZP-N domains homolog (432 aa).

As to expression, expressed specifically by cells of the ciliated left-right organizer.

In Danio rerio (Zebrafish), this protein is Ciliated left-right organizer protein containing ZP-N domains homolog (ciroz).